The sequence spans 204 residues: Chaperone protein TorD (204 aa).

It belongs to the TorD/DmsD family. TorD subfamily.

The protein localises to the cytoplasm. Involved in the biogenesis of TorA. Acts on TorA before the insertion of the molybdenum cofactor and, as a result, probably favors a conformation of the apoenzyme that is competent for acquiring the cofactor. The sequence is that of Chaperone protein TorD from Shewanella baltica (strain OS223).